Consider the following 123-residue polypeptide: MYSGICICLLLAMLSASSKAHQSEDAVVTEMDQLTLSQLPRYARASSAGQKKSFQRTDGDQRSNIGNVLVKYLQQSRKAGPSGRYVVLPNRPIFDQPHRINDRDYMGWMDFGRRSAEEYEYSS.

The first 20 residues, 1 to 20, serve as a signal peptide directing secretion; it reads MYSGICICLLLAMLSASSKA. A propeptide spanning residues 21–103 is cleaved from the precursor; sequence HQSEDAVVTE…FDQPHRINDR (83 aa). A Sulfotyrosine modification is found at Tyr-105. A Phenylalanine amide modification is found at Phe-111. Positions 115 to 123 are excised as a propeptide; the sequence is SAEEYEYSS.

Belongs to the gastrin/cholecystokinin family. In terms of processing, the precursor is cleaved by proteases to produce a number of active cholecystokinins. In terms of tissue distribution, brain, gastrointestinal tract and lung.

The protein localises to the secreted. The sequence is that of Cholecystokinin A (cck-a) from Xenopus laevis (African clawed frog).